Reading from the N-terminus, the 85-residue chain is MKEFLFLFHSTVGVIQTRKALQAAGMTFRVSDIPRDLRGGCGLCIWLTCPPGEEIQWVIPGLTESIYCQQDGVWRCIAHYGVSPR.

This is an uncharacterized protein from Escherichia coli (strain K12).